A 458-amino-acid chain; its full sequence is UDP-N-acetylglucosamine 1-carboxyvinyltransferase (458 aa).

34 to 35 serves as a coordination point for phosphoenolpyruvate; it reads KN. Arg-104 provides a ligand contact to UDP-N-acetyl-alpha-D-glucosamine. Residue Cys-128 is the Proton donor of the active site. Cys-128 carries the 2-(S-cysteinyl)pyruvic acid O-phosphothioketal modification. Asp-320 and Val-342 together coordinate UDP-N-acetyl-alpha-D-glucosamine.

Belongs to the EPSP synthase family. MurA subfamily.

The protein resides in the cytoplasm. It carries out the reaction phosphoenolpyruvate + UDP-N-acetyl-alpha-D-glucosamine = UDP-N-acetyl-3-O-(1-carboxyvinyl)-alpha-D-glucosamine + phosphate. The protein operates within cell wall biogenesis; peptidoglycan biosynthesis. Its function is as follows. Cell wall formation. Adds enolpyruvyl to UDP-N-acetylglucosamine. This Prochlorococcus marinus (strain NATL1A) protein is UDP-N-acetylglucosamine 1-carboxyvinyltransferase.